The sequence spans 229 residues: Sodium channel modifier 1 (229 aa).

Ser-2 bears the Phosphoserine mark. The Bipartite nuclear localization signal signature appears at 4 to 20; that stretch reads KREGDDWSQLNVLKKRR. A Matrin-type zinc finger spans residues 42–74; sequence FACAICPHRPVLDTLAMLTAHRAGKKHLSSLKL. Lys-67 participates in a covalent cross-link: Glycyl lysine isopeptide (Lys-Gly) (interchain with G-Cter in SUMO2). Disordered stretches follow at residues 80-105 and 128-187; these read QTGKGTEQNPRQQNELKTESKTEAPL and RRKH…TKRR. A compositionally biased stretch (polar residues) spans 82–92; it reads GKGTEQNPRQQ. A compositionally biased stretch (basic and acidic residues) spans 157 to 171; the sequence is ISKEPEPRERSDAKE. Phosphoserine is present on residues Ser-182 and Ser-218. Positions 187-229 are required for interaction with LUC7L2; that stretch reads RVLNHYLTLRSSGWVPDGRGRWIKDENVEFDSDEEEPPDLPLD.

Component of the minor spliceosome. Within this complex, interacts with RNF113A, as well as with SF3B1/SF3b155, SF3B2/SF3b145, SF3B3/SF3b130 and CDC5L. May interact with LUC7L2 and SNRNP70.

Its subcellular location is the nucleus. The protein localises to the nucleoplasm. It localises to the nucleus speckle. In terms of biological role, as a component of the minor spliceosome, involved in the splicing of U12-type introns in pre-mRNAs. Plays a role in the regulation of primary cilia length and Hedgehog signaling. This chain is Sodium channel modifier 1 (Scnm1), found in Mus musculus (Mouse).